Consider the following 478-residue polypeptide: MLPPGRNGTAHRARLGLQRQLAQVDAPGGSAAPLGPAQVVTAGLLTLLIVWTLLGNVLVCAAIVRSRHLRAKMTNIFIVSLAVSDLFVALLVMPWKAVAEVAGYWPFGAFCDIWVAFDIMCSTASILNLCIISVDRYWAISRPFRYERKMTQRVALVMVALAWTLSILISFIPVQLNWHRDKAGSQGREGLLSNETPWEEGWELDGRTENCDSSLNRTYAISSSLISFYIPVAIMIVTYTRIYRIAQVQIRRISSLERAAEHAQSCRSRGACEPDPSLRASIKKETKVFKTLSVIMGVFVCCWLPFFILNCMVPFCSSGDAQGPRTGFPCVSETTFDIFVWFGWANSSLNPIIYAFNADFRKVFAQLLGCSHLCFRTPVQTVNISNELISYNQDTVFHREIAAAYVHMIPNAVSSGDREVGEEEEAEEEGPFDHMSQISPTTPDGDLAAESVWELDCEEEVSLGKISPLTPNCFHKTA.

At 1 to 38 the chain is on the extracellular side; it reads MLPPGRNGTAHRARLGLQRQLAQVDAPGGSAAPLGPAQ. Residue Asn-7 is glycosylated (N-linked (GlcNAc...) asparagine). A helical membrane pass occupies residues 39–64; sequence VVTAGLLTLLIVWTLLGNVLVCAAIV. The Cytoplasmic segment spans residues 65–75; the sequence is RSRHLRAKMTN. A helical transmembrane segment spans residues 76 to 102; it reads IFIVSLAVSDLFVALLVMPWKAVAEVA. The Extracellular portion of the chain corresponds to 103-111; the sequence is GYWPFGAFC. Cys-111 and Cys-211 are oxidised to a cystine. Residues 112–134 traverse the membrane as a helical segment; it reads DIWVAFDIMCSTASILNLCIISV. The Cytoplasmic segment spans residues 135–153; that stretch reads DRYWAISRPFRYERKMTQR. A helical transmembrane segment spans residues 154 to 179; sequence VALVMVALAWTLSILISFIPVQLNWH. The Extracellular segment spans residues 180–215; the sequence is RDKAGSQGREGLLSNETPWEEGWELDGRTENCDSSL. The chain crosses the membrane as a helical span at residues 216 to 240; the sequence is NRTYAISSSLISFYIPVAIMIVTYT. At 241 to 289 the chain is on the cytoplasmic side; it reads RIYRIAQVQIRRISSLERAAEHAQSCRSRGACEPDPSLRASIKKETKVF. A helical membrane pass occupies residues 290-317; the sequence is KTLSVIMGVFVCCWLPFFILNCMVPFCS. Residues 318–335 are Extracellular-facing; sequence SGDAQGPRTGFPCVSETT. A helical transmembrane segment spans residues 336–357; the sequence is FDIFVWFGWANSSLNPIIYAFN. Residues 358-478 are Cytoplasmic-facing; the sequence is ADFRKVFAQL…LTPNCFHKTA (121 aa). Cys-370 carries S-palmitoyl cysteine lipidation. Residues 416-446 form a disordered region; it reads GDREVGEEEEAEEEGPFDHMSQISPTTPDGD. Acidic residues predominate over residues 420-430; sequence VGEEEEAEEEG.

This sequence belongs to the G-protein coupled receptor 1 family.

It is found in the cell membrane. Dopamine receptor whose activity is mediated by G proteins which activate adenylyl cyclase. This is D(1B) dopamine receptor (Drd5) from Mus musculus (Mouse).